A 587-amino-acid chain; its full sequence is Integrator complex subunit 14 (587 aa).

The VWFA domain maps to 3–113; sequence TLIALDASLS…NILQVVVFTD (111 aa). Disordered regions lie at residues 190 to 211 and 304 to 331; these read KSSD…KSEL and REKS…DTSN.

This sequence belongs to the Integrator subunit 14 family. As to quaternary structure, belongs to the multiprotein complex Integrator, at least composed of IntS1, IntS2, IntS3, IntS4, omd/IntS5, IntS6, defl/IntS7, IntS8, IntS9, IntS10, IntS11, IntS12, asun/IntS13, IntS14 and IntS15. The core complex associates with protein phosphatase 2A subunits mts/PP2A and Pp2A-29B, to form the Integrator-PP2A (INTAC) complex.

It is found in the nucleus. Component of the integrator complex, a multiprotein complex that terminates RNA polymerase II (Pol II) transcription in the promoter-proximal region of genes. The integrator complex provides a quality checkpoint during transcription elongation by driving premature transcription termination of transcripts that are unfavorably configured for transcriptional elongation: the complex terminates transcription by (1) catalyzing dephosphorylation of the C-terminal domain (CTD) of Pol II subunit Polr2A/Rbp1 and Spt5, and (2) degrading the exiting nascent RNA transcript via endonuclease activity. The integrator complex is also involved in the 3'-end processing of the U7 snRNA, and also the spliceosomal snRNAs U1, U2, U4 and U5. The chain is Integrator complex subunit 14 from Drosophila melanogaster (Fruit fly).